A 478-amino-acid polypeptide reads, in one-letter code: Chromosomal replication initiator protein DnaA (478 aa).

The interval 1 to 71 (MNLTHIWKTT…RNALTRVVGY (71 aa)) is domain I, interacts with DnaA modulators. The domain II stretch occupies residues 71–136 (YPVQVQVLIA…LDLASAMRSG (66 aa)). The segment at 137-353 (MLNPRYTFAS…GSLNRVAAYA (217 aa)) is domain III, AAA+ region. The ATP site is built by glycine 181, glycine 183, lysine 184, and threonine 185. Positions 354–478 (ELNRLPITID…RERIQMMRGL (125 aa)) are domain IV, binds dsDNA.

The protein belongs to the DnaA family. Oligomerizes as a right-handed, spiral filament on DNA at oriC.

It localises to the cytoplasm. Its function is as follows. Plays an essential role in the initiation and regulation of chromosomal replication. ATP-DnaA binds to the origin of replication (oriC) to initiate formation of the DNA replication initiation complex once per cell cycle. Binds the DnaA box (a 9 base pair repeat at the origin) and separates the double-stranded (ds)DNA. Forms a right-handed helical filament on oriC DNA; dsDNA binds to the exterior of the filament while single-stranded (ss)DNA is stabiized in the filament's interior. The ATP-DnaA-oriC complex binds and stabilizes one strand of the AT-rich DNA unwinding element (DUE), permitting loading of DNA polymerase. After initiation quickly degrades to an ADP-DnaA complex that is not apt for DNA replication. Binds acidic phospholipids. In Chloroflexus aggregans (strain MD-66 / DSM 9485), this protein is Chromosomal replication initiator protein DnaA.